Reading from the N-terminus, the 214-residue chain is Melanoregulin (214 aa).

Residues 162-172 carry the Cholesterol-binding sequence motif motif; the sequence is LSERYLLVVDR. The residue at position 213 (Ser213) is a Phosphoserine.

It belongs to the melanoregulin family. In terms of assembly, identified in a complex with RILP and DCTN1; interacts directly with RILP, but does not interact directly with DCTN1. Interacts with PRPH2. Post-translationally, palmitoylated. Palmitoylation is required to maintain the protein at the melanosome membrane. Detected in melanocytes. Expressed in retina, in retinal pigment epithelium (at protein level). Widely expressed with higher expression in skin, heart, liver, testis and thymus. Detected in retina, in retinal pigment epithelium cells.

Its subcellular location is the apical cell membrane. The protein resides in the melanosome membrane. The protein localises to the lysosome membrane. It is found in the cytoplasmic vesicle membrane. Functionally, probably functions as a cargo-recognition protein that couples cytoplasmic vesicles to the transport machinery. Plays a role in hair pigmentation, a process that involves shedding of melanosome-containing vesicles from melanocytes, followed by phagocytosis of the melanosome-containing vesicles by keratinocytes. Functions on melanosomes as receptor for RILP and the complex formed by RILP and DCTN1, and thereby contributes to retrograde melanosome transport from the cell periphery to the center. Overexpression causes accumulation of late endosomes and/or lysosomes at the microtubule organising center (MTOC) at the center of the cell. Probably binds cholesterol and requires the presence of cholesterol in membranes to function in microtubule-mediated retrograde organelle transport. Binds phosphatidylinositol 3-phosphate, phosphatidylinositol 4-phosphate, phosphatidylinositol 5-phosphate and phosphatidylinositol 3,5-bisphosphate, but not phosphatidylinositol 3,4-bisphosphate or phosphatidylinositol 4,5-bisphosphate. Required for normal phagosome clearing and normal activation of lysosomal enzymes in lysosomes from retinal pigment epithelium cells. Required for normal degradation of the lipofuscin component N-retinylidene-N-retinylethanolamine (A2E) in the eye. May function in membrane fusion and regulate the biogenesis of disk membranes of photoreceptor rod cells. In Mus musculus (Mouse), this protein is Melanoregulin (Mreg).